The chain runs to 690 residues: Lipase 2 (690 aa).

The first 37 residues, 1–37 (MLRGQEERKYSIRKYSIGVVSVLAATMFVVSSHEAQA), serve as a signal peptide directing secretion. A propeptide spanning residues 38 to 295 (SEKTPTNAAV…ADAKKVRPLK (258 aa)) is cleaved from the precursor. Residues 53 to 71 (NQPGEQGNAITSHQMQSGK) show a composition bias toward polar residues. The interval 53-266 (NQPGEQGNAI…KPTDKNTDNK (214 aa)) is disordered. Residues 72-81 (QLDDMHKENG) show a composition bias toward basic and acidic residues. Composition is skewed to polar residues over residues 93–114 (LQLS…NDNQ), 124–171 (SKQS…QPSI), and 185–206 (PTST…AQDA). Composition is skewed to basic and acidic residues over residues 225–237 (IDAK…RQSE) and 257–266 (KPTDKNTDNK). Ser-412 functions as the Nucleophile in the catalytic mechanism. Position 579 (Gly-579) interacts with Ca(2+). Catalysis depends on Asp-603, which acts as the Charge relay system. Asp-644 provides a ligand contact to Ca(2+). His-645 (charge relay system) is an active-site residue. Ca(2+) contacts are provided by Asp-647, Asp-652, and Asp-655.

This sequence belongs to the AB hydrolase superfamily. Lipase family.

The protein localises to the secreted. The catalysed reaction is a triacylglycerol + H2O = a diacylglycerol + a fatty acid + H(+). This Staphylococcus aureus (strain MSSA476) protein is Lipase 2 (lip2).